Reading from the N-terminus, the 192-residue chain is Ornithine lipid N-methyltransferase (192 aa).

The protein belongs to the methyltransferase superfamily.

It catalyses the reaction an N(2)-[(3R)-3-(2-saturated-acyloxy)acyl]-L-ornithine lipid + 3 S-adenosyl-L-methionine = an N,N,N-trimethylornithine lipid + 3 S-adenosyl-L-homocysteine + 3 H(+). In terms of biological role, catalyzes the 3-fold methylation of ornithine lipids. Forms ornithine lipids that are mono-, di-, and trimethylated on the delta-nitrogen of the ornithine head group. In Singulisphaera acidiphila (strain ATCC BAA-1392 / DSM 18658 / VKM B-2454 / MOB10), this protein is Ornithine lipid N-methyltransferase.